A 92-amino-acid chain; its full sequence is Small ribosomal subunit protein uS19 (92 aa).

This sequence belongs to the universal ribosomal protein uS19 family.

Functionally, protein S19 forms a complex with S13 that binds strongly to the 16S ribosomal RNA. This chain is Small ribosomal subunit protein uS19, found in Trichlorobacter lovleyi (strain ATCC BAA-1151 / DSM 17278 / SZ) (Geobacter lovleyi).